The primary structure comprises 560 residues: Probable methionine--tRNA ligase, cytoplasmic (560 aa).

Residues 16–26 (PYVNNQPHLGN) carry the 'HIGH' region motif. The 'KMSKS' region motif lies at 347–351 (KFSKS). Lys350 contributes to the ATP binding site.

The protein belongs to the class-I aminoacyl-tRNA synthetase family.

The protein resides in the cytoplasm. The catalysed reaction is tRNA(Met) + L-methionine + ATP = L-methionyl-tRNA(Met) + AMP + diphosphate. The chain is Probable methionine--tRNA ligase, cytoplasmic from Vairimorpha ceranae (strain BRL01) (Microsporidian parasite).